Reading from the N-terminus, the 130-residue chain is Histone H2A type 1-K (130 aa).

Positions 1–22 (MSGRGKQGGKARAKAKTRSSRA) are disordered. Position 2 is an N-acetylserine (Ser-2). Ser-2 is subject to Phosphoserine; by RPS6KA5. Arg-4 is modified (citrulline; alternate). Position 4 is a symmetric dimethylarginine; by PRMT5; alternate (Arg-4). Lys-6 and Lys-10 each carry N6-(2-hydroxyisobutyryl)lysine; alternate. At Lys-6 the chain carries N6-(beta-hydroxybutyryl)lysine; alternate. Lys-6 and Lys-10 each carry N6-acetyllysine; alternate. Residues 7–19 (QGGKARAKAKTRS) show a composition bias toward basic residues. Lys-10 is modified (N6-lactoyllysine; alternate). Residue Lys-10 is modified to N6-succinyllysine; alternate. Residues Lys-14 and Lys-16 each participate in a glycyl lysine isopeptide (Lys-Gly) (interchain with G-Cter in ubiquitin) cross-link. Position 37 is an N6-(2-hydroxyisobutyryl)lysine; alternate (Lys-37). Residue Lys-37 is modified to N6-(beta-hydroxybutyryl)lysine; alternate. At Lys-37 the chain carries N6-crotonyllysine; alternate. An N6-(2-hydroxyisobutyryl)lysine mark is found at Lys-75 and Lys-76. At Lys-96 the chain carries N6-(2-hydroxyisobutyryl)lysine; alternate. N6-succinyllysine; alternate is present on Lys-96. Lys-96 carries the N6-glutaryllysine; alternate modification. N5-methylglutamine is present on Gln-105. Residue Lys-119 is modified to N6-(2-hydroxyisobutyryl)lysine; alternate. N6-crotonyllysine; alternate occurs at positions 119 and 120. Lys-119 and Lys-120 each carry N6-glutaryllysine; alternate. An N6-(beta-hydroxybutyryl)lysine; alternate modification is found at Lys-120. Residue Lys-120 forms a Glycyl lysine isopeptide (Lys-Gly) (interchain with G-Cter in ubiquitin); alternate linkage. Thr-121 carries the phosphothreonine; by DCAF1 modification. Lys-126 carries the post-translational modification N6-(beta-hydroxybutyryl)lysine; alternate. Lys-126 is subject to N6-crotonyllysine; alternate. At Lys-126 the chain carries N6-glutaryllysine; alternate.

Belongs to the histone H2A family. The nucleosome is a histone octamer containing two molecules each of H2A, H2B, H3 and H4 assembled in one H3-H4 heterotetramer and two H2A-H2B heterodimers. The octamer wraps approximately 147 bp of DNA. Deiminated on Arg-4 in granulocytes upon calcium entry. Post-translationally, monoubiquitination of Lys-120 (H2AK119Ub) by RING1, TRIM37 and RNF2/RING2 complex gives a specific tag for epigenetic transcriptional repression and participates in X chromosome inactivation of female mammals. It is involved in the initiation of both imprinted and random X inactivation. Ubiquitinated H2A is enriched in inactive X chromosome chromatin. Ubiquitination of H2A functions downstream of methylation of 'Lys-27' of histone H3 (H3K27me). H2AK119Ub by RNF2/RING2 can also be induced by ultraviolet and may be involved in DNA repair. Following DNA double-strand breaks (DSBs), it is ubiquitinated through 'Lys-63' linkage of ubiquitin moieties by the E2 ligase UBE2N and the E3 ligases RNF8 and RNF168, leading to the recruitment of repair proteins to sites of DNA damage. Ubiquitination at Lys-14 and Lys-16 (H2AK13Ub and H2AK15Ub, respectively) in response to DNA damage is initiated by RNF168 that mediates monoubiquitination at these 2 sites, and 'Lys-63'-linked ubiquitin are then conjugated to monoubiquitin; RNF8 is able to extend 'Lys-63'-linked ubiquitin chains in vitro. Deubiquitinated by USP51 at Lys-14 and Lys-16 (H2AK13Ub and H2AK15Ub, respectively) after damaged DNA is repaired. H2AK119Ub and ionizing radiation-induced 'Lys-63'-linked ubiquitination (H2AK13Ub and H2AK15Ub) are distinct events. In terms of processing, phosphorylation on Ser-2 (H2AS1ph) is enhanced during mitosis. Phosphorylation on Ser-2 by RPS6KA5/MSK1 directly represses transcription. Acetylation of H3 inhibits Ser-2 phosphorylation by RPS6KA5/MSK1. Phosphorylation at Thr-121 (H2AT120ph) by DCAF1 is present in the regulatory region of many tumor suppresor genes and down-regulates their transcription. Symmetric dimethylation on Arg-4 by the PRDM1/PRMT5 complex may play a crucial role in the germ-cell lineage. Post-translationally, glutamine methylation at Gln-105 (H2AQ104me) by FBL is specifically dedicated to polymerase I. It is present at 35S ribosomal DNA locus and impairs binding of the FACT complex. In terms of processing, crotonylation (Kcr) is specifically present in male germ cells and marks testis-specific genes in post-meiotic cells, including X-linked genes that escape sex chromosome inactivation in haploid cells. Crotonylation marks active promoters and enhancers and confers resistance to transcriptional repressors. It is also associated with post-meiotically activated genes on autosomes. Hydroxybutyrylation of histones is induced by starvation. Post-translationally, lactylated in macrophages by EP300/P300 by using lactoyl-CoA directly derived from endogenous or exogenous lactate, leading to stimulates gene transcription.

Its subcellular location is the nucleus. It localises to the chromosome. Core component of nucleosome. Nucleosomes wrap and compact DNA into chromatin, limiting DNA accessibility to the cellular machineries which require DNA as a template. Histones thereby play a central role in transcription regulation, DNA repair, DNA replication and chromosomal stability. DNA accessibility is regulated via a complex set of post-translational modifications of histones, also called histone code, and nucleosome remodeling. The sequence is that of Histone H2A type 1-K from Mus musculus (Mouse).